We begin with the raw amino-acid sequence, 242 residues long: Uridylate kinase (242 aa).

15-18 (KLSG) provides a ligand contact to ATP. Residues 23–28 (GAEGFG) are involved in allosteric activation by GTP. Glycine 57 is a binding site for UMP. Residues glycine 58 and arginine 62 each coordinate ATP. UMP-binding positions include aspartate 77 and 138-145 (TGNPFFTT). Threonine 165, tyrosine 171, and aspartate 174 together coordinate ATP.

It belongs to the UMP kinase family. As to quaternary structure, homohexamer.

The protein localises to the cytoplasm. The enzyme catalyses UMP + ATP = UDP + ADP. Its pathway is pyrimidine metabolism; CTP biosynthesis via de novo pathway; UDP from UMP (UMPK route): step 1/1. Allosterically activated by GTP. Inhibited by UTP. In terms of biological role, catalyzes the reversible phosphorylation of UMP to UDP. In Photorhabdus laumondii subsp. laumondii (strain DSM 15139 / CIP 105565 / TT01) (Photorhabdus luminescens subsp. laumondii), this protein is Uridylate kinase.